Consider the following 506-residue polypeptide: 26S proteasome non-ATPase regulatory subunit 5 (506 aa).

This sequence belongs to the proteasome subunit S5B/HSM3 family. Interacts with PI31; this interaction is increased by PI31 ADP-ribosylation. Interacts with Rpt2.

Its function is as follows. Acts as a chaperone during the assembly of the 26S proteasome. The polypeptide is 26S proteasome non-ATPase regulatory subunit 5 (Drosophila melanogaster (Fruit fly)).